Reading from the N-terminus, the 239-residue chain is Carboxy-S-adenosyl-L-methionine synthase (239 aa).

Residues tyrosine 35, 64–66 (GSS), 114–115 (DL), asparagine 129, and arginine 196 each bind S-adenosyl-L-methionine.

It belongs to the class I-like SAM-binding methyltransferase superfamily. Cx-SAM synthase family. As to quaternary structure, homodimer.

The enzyme catalyses prephenate + S-adenosyl-L-methionine = carboxy-S-adenosyl-L-methionine + 3-phenylpyruvate + H2O. Its function is as follows. Catalyzes the conversion of S-adenosyl-L-methionine (SAM) to carboxy-S-adenosyl-L-methionine (Cx-SAM). In Helicobacter hepaticus (strain ATCC 51449 / 3B1), this protein is Carboxy-S-adenosyl-L-methionine synthase.